The chain runs to 832 residues: Regulator of drug sensitivity 1 (832 aa).

Residues 15–42 (CLQCKKIKRKCDKLRPACSRCQQNSLQC) constitute a DNA-binding region (zn(2)-C6 fungal-type).

The protein localises to the nucleus. In terms of biological role, zinc cluster transcription factor involved in resistance to cycloheximide. In Saccharomyces cerevisiae (strain ATCC 204508 / S288c) (Baker's yeast), this protein is Regulator of drug sensitivity 1 (RDS1).